Reading from the N-terminus, the 303-residue chain is MSEQPLSQDEKRRLLRERRQAKMARGKASERLNNILSQGSSVKGTTDPVSVFDSKPEPTASSTKPAEVSPAVSSHRDPEDDPDLMDIDNVTPEIKVDEPNIDKMLSDIFGANVGGNATDSSQDDFMANMMNMMKQGEGVDGSTGGTAEPQEPGYQSQLNAYNIYQQRLWKFRFSIIRFAAVLTNFFYHYLTIQDYSFTSSPHFYVRALAPHPAVNSFITWFSTCEVAILASFYLITSKNNIYANASDGNLLLKGISMGAMVLPQLRAYQPLVIRLAHYWEVFSMLLGDIFLVVVLFGLVSIYN.

Residues 1–168 are Cytoplasmic-facing; it reads MSEQPLSQDE…NAYNIYQQRL (168 aa). Residues 19-86 are disordered; that stretch reads RQAKMARGKA…DPEDDPDLMD (68 aa). The segment covering 31-48 has biased composition (polar residues); that stretch reads RLNNILSQGSSVKGTTDP. The helical transmembrane segment at 169 to 189 threads the bilayer; it reads WKFRFSIIRFAAVLTNFFYHY. The Lumenal segment spans residues 190 to 216; that stretch reads LTIQDYSFTSSPHFYVRALAPHPAVNS. The chain crosses the membrane as a helical span at residues 217–236; it reads FITWFSTCEVAILASFYLIT. Residues 237 to 280 lie on the Cytoplasmic side of the membrane; it reads SKNNIYANASDGNLLLKGISMGAMVLPQLRAYQPLVIRLAHYWE. A helical membrane pass occupies residues 281-301; it reads VFSMLLGDIFLVVVLFGLVSI. Over 302 to 303 the chain is Lumenal; sequence YN.

It belongs to the GET2 family. Component of the Golgi to ER traffic (GET) complex, which is composed of GET1, GET2 and GET3. Within the complex, GET1 and GET2 form a heterotetramer which is stabilized by phosphatidylinositol binding and which binds to the GET3 homodimer.

It is found in the endoplasmic reticulum membrane. It localises to the golgi apparatus membrane. Its function is as follows. Required for the post-translational delivery of tail-anchored (TA) proteins to the endoplasmic reticulum. Together with GET1, acts as a membrane receptor for soluble GET3, which recognizes and selectively binds the transmembrane domain of TA proteins in the cytosol. The GET complex cooperates with the HDEL receptor ERD2 to mediate the ATP-dependent retrieval of resident ER proteins that contain a C-terminal H-D-E-L retention signal from the Golgi to the ER. The polypeptide is Golgi to ER traffic protein 2 (Debaryomyces hansenii (strain ATCC 36239 / CBS 767 / BCRC 21394 / JCM 1990 / NBRC 0083 / IGC 2968) (Yeast)).